Consider the following 181-residue polypeptide: Regulator of G-protein signaling 10 (181 aa).

Residues Met1–Leu32 form a disordered region. Positions Gly23–Leu32 are enriched in low complexity. 2 positions are modified to phosphoserine: Ser24 and Ser41. An RGS domain is found at Ser41–Lys156. Cys74 carries the S-palmitoyl cysteine lipid modification. The tract at residues Thr158–Thr181 is disordered. A Phosphoserine modification is found at Ser176.

As to quaternary structure, interacts with GNAZ, GNAI1 and GNAI3. Associates specifically with the activated, GTP-bound forms of GNAZ and GNAI3.

Its subcellular location is the cytoplasm. It localises to the cytosol. The protein resides in the nucleus. Regulates G protein-coupled receptor signaling cascades, including signaling downstream of the muscarinic acetylcholine receptor CHRM2. Inhibits signal transduction by increasing the GTPase activity of G protein alpha subunits, thereby driving them into their inactive GDP-bound form. Modulates the activity of potassium channels that are activated in response to CHRM2 signaling. Activity on GNAZ is inhibited by palmitoylation of the G-protein. This chain is Regulator of G-protein signaling 10 (RGS10), found in Homo sapiens (Human).